A 318-amino-acid polypeptide reads, in one-letter code: Probable metal transport system membrane protein CT_070 (318 aa).

The next 10 membrane-spanning stretches (helical) occupy residues 1 to 21, 39 to 59, 64 to 84, 94 to 114, 124 to 144, 170 to 190, 196 to 216, 226 to 246, 252 to 272, and 285 to 305; these read MVAS…LVFF, IQVI…TFLV, AMYA…VCLF, QALT…IHFI, ASTA…LVFL, IFLV…SFVC, IFAF…MLLL, AVGV…AKLI, EMMV…PALS, and TSGL…VFVC.

It belongs to the ABC-3 integral membrane protein family.

It is found in the cell inner membrane. In terms of biological role, part of an ATP-driven transport system CT_067/CT_068/CT_069/CT_070 for a metal. The polypeptide is Probable metal transport system membrane protein CT_070 (Chlamydia trachomatis serovar D (strain ATCC VR-885 / DSM 19411 / UW-3/Cx)).